The chain runs to 482 residues: Protein nucleotidyltransferase YdiU (482 aa).

The ATP site is built by Gly-88, Gly-90, Arg-91, Lys-111, Asp-123, Gly-124, Arg-174, and Arg-181. Asp-250 serves as the catalytic Proton acceptor. Asn-251 and Asp-260 together coordinate Mg(2+). Asp-260 is an ATP binding site.

This sequence belongs to the SELO family. The cofactor is Mg(2+). Mn(2+) is required as a cofactor.

It carries out the reaction L-seryl-[protein] + ATP = 3-O-(5'-adenylyl)-L-seryl-[protein] + diphosphate. It catalyses the reaction L-threonyl-[protein] + ATP = 3-O-(5'-adenylyl)-L-threonyl-[protein] + diphosphate. The enzyme catalyses L-tyrosyl-[protein] + ATP = O-(5'-adenylyl)-L-tyrosyl-[protein] + diphosphate. The catalysed reaction is L-histidyl-[protein] + UTP = N(tele)-(5'-uridylyl)-L-histidyl-[protein] + diphosphate. It carries out the reaction L-seryl-[protein] + UTP = O-(5'-uridylyl)-L-seryl-[protein] + diphosphate. It catalyses the reaction L-tyrosyl-[protein] + UTP = O-(5'-uridylyl)-L-tyrosyl-[protein] + diphosphate. In terms of biological role, nucleotidyltransferase involved in the post-translational modification of proteins. It can catalyze the addition of adenosine monophosphate (AMP) or uridine monophosphate (UMP) to a protein, resulting in modifications known as AMPylation and UMPylation. The protein is Protein nucleotidyltransferase YdiU of Cronobacter sakazakii (strain ATCC BAA-894) (Enterobacter sakazakii).